The following is a 168-amino-acid chain: Signal peptidase I V (168 aa).

Over 1 to 6 (MKKRFW) the chain is Cytoplasmic. The helical transmembrane segment at 7–26 (FLAGVVSVVLAIQVKNAVFI) threads the bilayer. Over 27–168 (DYKVEGVSMN…NIVGVISDAE (142 aa)) the chain is Extracellular. Active-site residues include serine 34 and lysine 75.

It belongs to the peptidase S26 family.

Its subcellular location is the cell membrane. It catalyses the reaction Cleavage of hydrophobic, N-terminal signal or leader sequences from secreted and periplasmic proteins.. This chain is Signal peptidase I V (sipV), found in Bacillus subtilis (strain 168).